A 120-amino-acid chain; its full sequence is UPF0102 protein PTH_1707 (120 aa).

It belongs to the UPF0102 family.

This is UPF0102 protein PTH_1707 from Pelotomaculum thermopropionicum (strain DSM 13744 / JCM 10971 / SI).